Reading from the N-terminus, the 575-residue chain is Glutathione hydrolase proenzyme (575 aa).

Positions 1 to 24 are cleaved as a signal peptide; it reads MKNQTFSKALLATALSCALFNVHA. Residue R100 coordinates L-glutamate. Residue T376 is the Nucleophile of the active site. Residues T394, N396, E415, D418, 447–448, and 468–469 each bind L-glutamate; these read SS and GG.

This sequence belongs to the gamma-glutamyltransferase family. This enzyme consists of two polypeptide chains, which are synthesized in precursor form from a single polypeptide. Post-translationally, cleaved by autocatalysis into a large and a small subunit.

It is found in the periplasm. The catalysed reaction is an N-terminal (5-L-glutamyl)-[peptide] + an alpha-amino acid = 5-L-glutamyl amino acid + an N-terminal L-alpha-aminoacyl-[peptide]. It catalyses the reaction glutathione + H2O = L-cysteinylglycine + L-glutamate. The enzyme catalyses an S-substituted glutathione + H2O = an S-substituted L-cysteinylglycine + L-glutamate. Its pathway is sulfur metabolism; glutathione metabolism. The sequence is that of Glutathione hydrolase proenzyme (ggt) from Pseudomonas sp. (strain A14).